A 495-amino-acid chain; its full sequence is MTADPDPPFVAVWNTVVAELNGDPAATGPRNGDGALPTLTPQQRAWLKLVKPLVITEGFALLSVPTPFVQNEIERHLREPIITALSRHLGQRVELGVRIATPSPEDDDPPPSPVIADIDEVDEDTEARVSAEETWPRYFSRPPETPAAEDPNAVSLNRRYTFDTFVIGASNRFAHAATLAIAEAPARAYNPLFIWGESGLGKTHLLHAAGNYAQRLFPGMRVKYVSTEEFTNDFINSLRDDRKASFKRSYRDIDVLLVDDIQFIEGKEGIQEEFFHTFNTLHNANKQIVISSDRPPKQLATLEDRLRTRFEWGLITDVQPPELETRIAILRKKAQMDRLDVPDDVLELIASSIERNIRELEGALIRVTAFASLNKTPIDKSLAEIVLRDLISDASTMQISTAAIMAATAEYFETTIEELRGPGKTRALAQSRQIAMYLCRELTDLSLPKIGQAFGRDHTTVMYAEKKIRGEMAERREVFDHVKELTTRIRQRAKR.

Residues 1 to 91 are domain I, interacts with DnaA modulators; sequence MTADPDPPFV…ITALSRHLGQ (91 aa). Residues 91 to 154 form a domain II region; it reads QRVELGVRIA…TPAAEDPNAV (64 aa). A domain III, AAA+ region region spans residues 155 to 371; it reads SLNRRYTFDT…GALIRVTAFA (217 aa). ATP is bound by residues G199, G201, K202, and T203. The tract at residues 372–495 is domain IV, binds dsDNA; the sequence is SLNKTPIDKS…TTRIRQRAKR (124 aa).

The protein belongs to the DnaA family. In terms of assembly, oligomerizes as a right-handed, spiral filament on DNA at oriC.

The protein resides in the cytoplasm. Functionally, plays an essential role in the initiation and regulation of chromosomal replication. ATP-DnaA binds to the origin of replication (oriC) to initiate formation of the DNA replication initiation complex once per cell cycle. Binds the DnaA box (a 9 base pair repeat at the origin) and separates the double-stranded (ds)DNA. Forms a right-handed helical filament on oriC DNA; dsDNA binds to the exterior of the filament while single-stranded (ss)DNA is stabiized in the filament's interior. The ATP-DnaA-oriC complex binds and stabilizes one strand of the AT-rich DNA unwinding element (DUE), permitting loading of DNA polymerase. After initiation quickly degrades to an ADP-DnaA complex that is not apt for DNA replication. Binds acidic phospholipids. This Mycobacterium sp. (strain JLS) protein is Chromosomal replication initiator protein DnaA.